The sequence spans 522 residues: Neuropeptide FF receptor 2 (522 aa).

At 1 to 147 the chain is on the extracellular side; sequence MNSFFGTPAA…NYYLHQPQVA (147 aa). Positions 25–49 are disordered; the sequence is KEAGRERRALSVQQRGGPAWSGSLE. Asparagine 110, asparagine 122, and asparagine 133 each carry an N-linked (GlcNAc...) asparagine glycan. A helical membrane pass occupies residues 148-168; sequence AIFIISYFLIFFLCMMGNTVV. Topologically, residues 169 to 184 are cytoplasmic; sequence CFIVMRNKHMHTVTNL. The chain crosses the membrane as a helical span at residues 185–205; that stretch reads FILNLAISDLLVGIFCMPITL. The Extracellular segment spans residues 206–221; it reads LDNIIAGWPFGNTMCK. Residues cysteine 220 and cysteine 308 are joined by a disulfide bond. A helical transmembrane segment spans residues 222 to 242; that stretch reads ISGLVQGISVAASVFTLVAIA. The Cytoplasmic portion of the chain corresponds to 243–262; it reads VDRFQCVVYPFKPKLTIKTA. A helical transmembrane segment spans residues 263 to 283; the sequence is FVIIMIIWVLAITIMSPSAVM. Over 284–319 the chain is Extracellular; the sequence is LHVQEEKYYRVRLNSQNKTSPVYWCREDWPNQEMRK. An N-linked (GlcNAc...) asparagine glycan is attached at asparagine 300. The helical transmembrane segment at 320-340 threads the bilayer; sequence IYTTVLFANIYLAPLSLIVIM. Residues 341 to 377 lie on the Cytoplasmic side of the membrane; sequence YGRIGISLFRAAVPHTGRKNQEQWHVVSRKKQKIIKM. The helical transmembrane segment at 378 to 398 threads the bilayer; sequence LLIVALLFILSWLPLWTLMML. Residues 399–413 are Extracellular-facing; it reads SDYADLSPNELQIIN. A helical transmembrane segment spans residues 414–434; the sequence is IYIYPFAHWLAFGNSSVNPII. The Cytoplasmic portion of the chain corresponds to 435–522; sequence YGFFNENFRR…LKETTNSSEI (88 aa).

The protein belongs to the G-protein coupled receptor 1 family. In terms of tissue distribution, isoform 1 is abundant in placenta. Relatively highly expressed in thymus, testis, and small intestine. Expressed at low levels in several tissues including spleen, prostate, brain, heart, ovary, colon, kidney, lung, liver and pancreas and not expressed in skeletal muscle and leukocytes. Isoform 2 expression is highest in placenta (but at relatively low level compared to isoform 1). Very low level of expression in numerous tissues including adipose tissue and many brain regions. Isoform 3 is expressed in brain and heart and, at lower levels, in kidney, liver, lung and pancreas.

The protein resides in the cell membrane. Functionally, receptor for NPAF (A-18-F-amide) and NPFF (F-8-F-amide) neuropeptides, also known as morphine-modulating peptides. Can also be activated by a variety of naturally occurring or synthetic FMRF-amide like ligands. This receptor mediates its action by association with G proteins that activate a phosphatidylinositol-calcium second messenger system. The protein is Neuropeptide FF receptor 2 of Homo sapiens (Human).